The primary structure comprises 128 residues: Small ribosomal subunit protein eS8 (128 aa).

The protein belongs to the eukaryotic ribosomal protein eS8 family. In terms of assembly, part of the 30S ribosomal subunit.

This chain is Small ribosomal subunit protein eS8, found in Metallosphaera sedula (strain ATCC 51363 / DSM 5348 / JCM 9185 / NBRC 15509 / TH2).